The sequence spans 342 residues: tRNA N6-adenosine threonylcarbamoyltransferase (342 aa).

Fe cation-binding residues include histidine 111 and histidine 115. Substrate contacts are provided by residues 134 to 138 (LVSGG), aspartate 167, glycine 180, and asparagine 277. Aspartate 305 contributes to the Fe cation binding site.

This sequence belongs to the KAE1 / TsaD family. The cofactor is Fe(2+).

The protein resides in the cytoplasm. It catalyses the reaction L-threonylcarbamoyladenylate + adenosine(37) in tRNA = N(6)-L-threonylcarbamoyladenosine(37) in tRNA + AMP + H(+). Its function is as follows. Required for the formation of a threonylcarbamoyl group on adenosine at position 37 (t(6)A37) in tRNAs that read codons beginning with adenine. Is involved in the transfer of the threonylcarbamoyl moiety of threonylcarbamoyl-AMP (TC-AMP) to the N6 group of A37, together with TsaE and TsaB. TsaD likely plays a direct catalytic role in this reaction. This is tRNA N6-adenosine threonylcarbamoyltransferase from Haemophilus influenzae (strain ATCC 51907 / DSM 11121 / KW20 / Rd).